Reading from the N-terminus, the 238-residue chain is Uracil-DNA glycosylase (238 aa).

The active-site Proton acceptor is D72.

The protein belongs to the uracil-DNA glycosylase (UDG) superfamily. UNG family.

The protein resides in the cytoplasm. It catalyses the reaction Hydrolyzes single-stranded DNA or mismatched double-stranded DNA and polynucleotides, releasing free uracil.. Its function is as follows. Excises uracil residues from the DNA which can arise as a result of misincorporation of dUMP residues by DNA polymerase or due to deamination of cytosine. The protein is Uracil-DNA glycosylase of Chromobacterium violaceum (strain ATCC 12472 / DSM 30191 / JCM 1249 / CCUG 213 / NBRC 12614 / NCIMB 9131 / NCTC 9757 / MK).